The sequence spans 296 residues: Putative mannose 6-phosphate receptor-like protein C530.09c (296 aa).

The signal sequence occupies residues 1–25; the sequence is MRLLTCLINVLAGLTLFSQFQRAFG. Residues 26–206 lie on the Lumenal side of the membrane; sequence LTITRRGFKV…TVKKDSTLNP (181 aa). The MRH domain maps to 42–197; sequence PFCALHHPNT…EWKTIHACPT (156 aa). The cysteines at positions 44 and 87 are disulfide-linked. Residues N64, N81, N93, N96, and N143 are each glycosylated (N-linked (GlcNAc...) asparagine). Cystine bridges form between C147–C183 and C163–C195. Residues 207-227 traverse the membrane as a helical segment; that stretch reads VSVFLLFCAIAFLAYFVGGFV. Residues 228 to 249 lie on the Cytoplasmic side of the membrane; sequence YQRVVLNARGLRQIPNYEMWRS. Residues 250–270 form a helical membrane-spanning segment; sequence LFGFISDIVIILYSSILSILP. Residues 271–296 lie on the Lumenal side of the membrane; sequence SSITRMRGNRRNIDYVEDALIDDIDT.

This sequence belongs to the MRL1/IGF2R family.

The protein localises to the golgi apparatus. It is found in the trans-Golgi network membrane. The protein resides in the endosome membrane. This is Putative mannose 6-phosphate receptor-like protein C530.09c from Schizosaccharomyces pombe (strain 972 / ATCC 24843) (Fission yeast).